The sequence spans 198 residues: UPF0215 protein NEQ431 (198 aa).

Residues 179–198 (TKGDSSKPRAGGDSNPGPAG) form a disordered region.

The protein belongs to the UPF0215 family.

This chain is UPF0215 protein NEQ431, found in Nanoarchaeum equitans (strain Kin4-M).